The primary structure comprises 689 residues: DNA topoisomerase 1 (689 aa).

In terms of domain architecture, Toprim spans aspartate 3–isoleucine 113. Residues glutamate 9 and aspartate 82 each coordinate Mg(2+). Positions glutamate 129–glutamate 557 constitute a Topo IA-type catalytic domain. The segment at serine 163–glutamine 168 is interaction with DNA. Residue tyrosine 298 is the O-(5'-phospho-DNA)-tyrosine intermediate of the active site. The disordered stretch occupies residues serine 328–methionine 357. C4-type zinc fingers lie at residues cysteine 577 to cysteine 603, cysteine 617 to cysteine 645, and cysteine 658 to cysteine 681.

Belongs to the type IA topoisomerase family. Monomer. Mg(2+) serves as cofactor.

The catalysed reaction is ATP-independent breakage of single-stranded DNA, followed by passage and rejoining.. Releases the supercoiling and torsional tension of DNA, which is introduced during the DNA replication and transcription, by transiently cleaving and rejoining one strand of the DNA duplex. Introduces a single-strand break via transesterification at a target site in duplex DNA. The scissile phosphodiester is attacked by the catalytic tyrosine of the enzyme, resulting in the formation of a DNA-(5'-phosphotyrosyl)-enzyme intermediate and the expulsion of a 3'-OH DNA strand. The free DNA strand then undergoes passage around the unbroken strand, thus removing DNA supercoils. Finally, in the religation step, the DNA 3'-OH attacks the covalent intermediate to expel the active-site tyrosine and restore the DNA phosphodiester backbone. The protein is DNA topoisomerase 1 of Staphylococcus aureus.